A 366-amino-acid chain; its full sequence is MWNATPSEEPGFNLTLADLDWDASPGNDSLGDELLQLFPAPLLAGVTATCVALFVVGIAGNLLTMLVVSRFRELRTTTNLYLSSMAFSDLLIFLCMPLDLVRLWQYRPWNFGDLLCKLFQFVSESCTYATVLTITALSVERYFAICFPLRAKVVVTKGRVKLVIFVIWAVAFCSAGPIFVLVGVEHENGTDPWDTNECRPTEFAVRSGLLTVMVWVSSIFFFLPVFCLTVLYSLIGRKLWRRRRGDAVVGASLRDQNHKQTVKMLAVVVFAFILCWLPFHVGRYLFSKSFEPGSLEIAQISQYCNLVSFVLFYLSAAINPILYNIMSKKYRVAVFRLLGFEPFSQRKLSTLKDESSRAWTESSINT.

The Extracellular portion of the chain corresponds to 1 to 40; it reads MWNATPSEEPGFNLTLADLDWDASPGNDSLGDELLQLFPA. 2 N-linked (GlcNAc...) asparagine glycosylation sites follow: Asn-13 and Asn-27. A helical transmembrane segment spans residues 41 to 66; the sequence is PLLAGVTATCVALFVVGIAGNLLTML. Residues 67–72 lie on the Cytoplasmic side of the membrane; the sequence is VVSRFR. Residues 73–96 form a helical membrane-spanning segment; sequence ELRTTTNLYLSSMAFSDLLIFLCM. Residues 97-117 lie on the Extracellular side of the membrane; the sequence is PLDLVRLWQYRPWNFGDLLCK. A disulfide bridge links Cys-116 with Cys-198. The helical transmembrane segment at 118 to 139 threads the bilayer; that stretch reads LFQFVSESCTYATVLTITALSV. Residues 140 to 162 lie on the Cytoplasmic side of the membrane; it reads ERYFAICFPLRAKVVVTKGRVKL. A helical membrane pass occupies residues 163–183; that stretch reads VIFVIWAVAFCSAGPIFVLVG. The Extracellular segment spans residues 184–211; the sequence is VEHENGTDPWDTNECRPTEFAVRSGLLT. Residues 212-235 form a helical membrane-spanning segment; sequence VMVWVSSIFFFLPVFCLTVLYSLI. Over 236–263 the chain is Cytoplasmic; it reads GRKLWRRRRGDAVVGASLRDQNHKQTVK. A helical transmembrane segment spans residues 264–285; that stretch reads MLAVVVFAFILCWLPFHVGRYL. Residues 286-302 are Extracellular-facing; sequence FSKSFEPGSLEIAQISQ. Residues 303–326 traverse the membrane as a helical segment; it reads YCNLVSFVLFYLSAAINPILYNIM. The Cytoplasmic portion of the chain corresponds to 327–366; sequence SKKYRVAVFRLLGFEPFSQRKLSTLKDESSRAWTESSINT.

It belongs to the G-protein coupled receptor 1 family. As to expression, pituitary and hypothalamus.

The protein resides in the cell membrane. Receptor for ghrelin, coupled to G-alpha-11 proteins. Stimulates growth hormone secretion. Also binds other growth hormone releasing peptides (GHRP) (e.g. Met-enkephalin and GHRP-6) as well as non-peptide, low molecular weight secretagogues (e.g. L-692,429, MK-0677, adenosine). The sequence is that of Growth hormone secretagogue receptor type 1 (GHSR) from Homo sapiens (Human).